The primary structure comprises 532 residues: UDP-glucuronosyltransferase 1A4 (532 aa).

The first 27 residues, 1–27 (MVLGVWITLWRLVRLLLLLCVLPWAEG), serve as a signal peptide directing secretion. Residues asparagine 141 and asparagine 295 are each glycosylated (N-linked (GlcNAc...) asparagine). Residues 490 to 506 (VIGFLLAIVLTVAFVTF) traverse the membrane as a helical segment.

Belongs to the UDP-glycosyltransferase family. Homodimers. Homooligomer. Interacts with UGT1A1, UGT1A3, UGT1A6, UGT1A7, UGT1A8, UGT1A9 and UGT1A10 to form heterodimers.

The protein resides in the endoplasmic reticulum membrane. The enzyme catalyses glucuronate acceptor + UDP-alpha-D-glucuronate = acceptor beta-D-glucuronoside + UDP + H(+). The catalysed reaction is calcidiol + UDP-alpha-D-glucuronate = calcidiol 25-O-(beta-D-glucuronide) + UDP + H(+). It catalyses the reaction calcidiol + UDP-alpha-D-glucuronate = calcidiol 3-O-(beta-D-glucuronide) + UDP + H(+). It carries out the reaction calcitriol + UDP-alpha-D-glucuronate = calcitriol 25-O-(beta-D-glucuronide) + UDP + H(+). The enzyme catalyses (5Z,8Z,11Z,14Z)-eicosatetraenoate + UDP-alpha-D-glucuronate = O-[(5Z),(8Z),(11Z),(14Z)-eicosatetraenoyl]-beta-D-glucuronate + UDP. The catalysed reaction is 15-hydroxy-(5Z,8Z,11Z,13E)-eicosatetraenoate + UDP-alpha-D-glucuronate = 15-O-(beta-D-glucuronosyl)-(5Z,8Z,11Z,14Z)-eicosatetraenoate + UDP + H(+). It catalyses the reaction 20-hydroxy-(5Z,8Z,11Z,14Z)-eicosatetraenoate + UDP-alpha-D-glucuronate = 20-O-(beta-D-glucuronosyl)-(5Z,8Z,11Z,14Z)-eicosatetraenoate + UDP + H(+). Its function is as follows. UDP-glucuronosyltransferase (UGT) that catalyzes phase II biotransformation reactions in which lipophilic substrates are conjugated with glucuronic acid to increase the metabolite's water solubility, thereby facilitating excretion into either the urine or bile. Essential for the elimination and detoxification of drugs, xenobiotics and endogenous compounds. Involved in the glucuronidation of calcidiol, which is the major circulating form of vitamin D3 essential for the regulation of calcium and phosphate homeostasis. Also glucuronidates the biologically active form of vitamin D3, calcitriol, probably leading to its biliary transport and intestinal reabsorption. Involved in the glucuronidation of arachidonic acid (AA) and AA-derived eicosanoids including 15-HETE, 20-HETE and PGB1. The sequence is that of UDP-glucuronosyltransferase 1A4 (Ugt1a4) from Oryctolagus cuniculus (Rabbit).